A 415-amino-acid chain; its full sequence is Ornithine cyclodeaminase (415 aa).

9 residues coordinate NAD(+): Asn-241, Ala-242, Asp-320, Thr-352, Leu-354, His-355, Asp-373, Asp-396, and Val-397.

This sequence belongs to the AgrE/ArgZ ornithine cyclodeaminase family. NAD(+) is required as a cofactor.

The enzyme catalyses L-ornithine = L-proline + NH4(+). Catalyzes the conversion of ornithine to proline, with the release of ammonia. This chain is Ornithine cyclodeaminase, found in Methanococcus maripaludis (strain DSM 14266 / JCM 13030 / NBRC 101832 / S2 / LL).